Here is a 90-residue protein sequence, read N- to C-terminus: MPALEITIINKLGLHARAAAKFVGVAGRYPCQVRVGRNPESCVDGKSIMAVMMLAAGKGTNLHLHTEGEQEDEALNALVELINNRFDEGE.

The HPr domain occupies 1–89 (MPALEITIIN…ELINNRFDEG (89 aa)). His15 (pros-phosphohistidine intermediate) is an active-site residue.

The protein belongs to the HPr family.

It localises to the cytoplasm. Its function is as follows. General (non sugar-specific) component of the phosphoenolpyruvate-dependent sugar phosphotransferase system (sugar PTS). This major carbohydrate active-transport system catalyzes the phosphorylation of incoming sugar substrates concomitantly with their translocation across the cell membrane. The phosphoryl group from phosphoenolpyruvate (PEP) is transferred to the phosphoryl carrier protein HPr by enzyme I. Phospho-HPr then transfers it to the PTS EIIA domain. This is Phosphocarrier protein HPr (ptsH) from Pseudomonas aeruginosa (strain ATCC 15692 / DSM 22644 / CIP 104116 / JCM 14847 / LMG 12228 / 1C / PRS 101 / PAO1).